Consider the following 510-residue polypeptide: ETS translocation variant 5 (510 aa).

Positions 132 to 245 (KPLTPPATPL…PGDSRPSYHR (114 aa)) are disordered. Over residues 163–174 (TPGAGPVQGVGP) the composition is skewed to low complexity. Polar residues predominate over residues 211–224 (QYPSEQRFQRQLSE). S248 bears the Phosphoserine mark. A Glycyl lysine isopeptide (Lys-Gly) (interchain with G-Cter in SUMO2) cross-link involves residue K350. The ETS DNA-binding region spans 368 to 448 (LQLWQFLVTL…AGERYVYKFV (81 aa)).

The protein belongs to the ETS family. In terms of assembly, interacts (via C-terminal) with ZMYM5 (via N-terminal 120 amino acid region). In the brain, expressed predominantly in the cerebral cortex, the amygdala and the hypothalamus. Within the cerebral cortex, there is conspicuously high expression in cortical layers 2, 4 and 6 while expression is almost absent from layers 1, 3 and 5. High expression is also observed in the dorsal and ventral endopiriform claustrum. Strong expression is observed in limited parts of the amygdala including the basolateral amygdaloid nucleus, the bed stria terminalis and the central amygdaloid nucleus. Low to moderate levels are found in the hypothalamus while expression is almost absent in the thalamus. Hypothalamic expression is seen in the dorsomedial hypothalamic nucleus and also the central, dorsomedial and ventrolateral parts of the ventromedial hypothalamic nucleus. Strong expression is also identified in the nigrostriatal tract. In the mesencephalon, expression is restricted to the ventral tegmental area including the parabrachial pigmented nucleus. In the hippocampus, strongly expressed in the pyramidal cell layer. Some expression is also found in the lacunosum moleculare layer. Low levels of expression in the cerebellum, including the granular, molecular and Purkinje cell layers.

The protein resides in the nucleus. Its function is as follows. Binds to DNA sequences containing the consensus nucleotide core sequence 5'-GGAA.-3'. This chain is ETS translocation variant 5 (Etv5), found in Mus musculus (Mouse).